A 326-amino-acid chain; its full sequence is Vascular endothelial growth factor D (326 aa).

A signal peptide spans 1-21 (MYGEWAAVNILMMSYVYLVQG). A propeptide spanning residues 22-93 (FSIEHRAVKD…SRSTSHRSTR (72 aa)) is cleaved from the precursor. 3 disulfide bridges follow: cysteine 116-cysteine 158, cysteine 147-cysteine 194, and cysteine 151-cysteine 196. 2 N-linked (GlcNAc...) asparagine glycosylation sites follow: asparagine 160 and asparagine 190. Residues 211-326 (SIQIPEEDQC…CRSMVFSLSP (116 aa)) constitute a propeptide that is removed on maturation. One copy of the 1; approximate repeat lies at 227 to 242 (CPVDMLWDNTKCKCVL). A 4 X 16 AA repeats of C-X(10)-C-X-C-X(1,3)-C region spans residues 227 to 317 (CPVDMLWDNT…KHKMFHPDTC (91 aa)). Repeat copies occupy residues 263–278 (CGPH…ECVC) and 282–298 (CPGD…CFEC). An N-linked (GlcNAc...) asparagine glycan is attached at asparagine 292. The 4; truncated repeat unit spans residues 306–317 (CQKHKMFHPDTC).

It belongs to the PDGF/VEGF growth factor family. As to quaternary structure, homodimer; non-covalent and antiparallel. In terms of processing, undergoes a complex proteolytic maturation which generates a variety of processed secreted forms with increased activity toward VEGFR-3 and VEGFR-2. VEGF-D first form an antiparallel homodimer linked by disulfide bonds before secretion. The fully processed VEGF-D is composed mostly of two VEGF homology domains (VHDs) bound by non-covalent interactions. In terms of tissue distribution, highly expressed in the spleen, kidney, lung, tongue, ovary and mammary gland.

It localises to the secreted. In terms of biological role, growth factor active in angiogenesis, lymphangiogenesis and endothelial cell growth, stimulating their proliferation and migration and also has effects on the permeability of blood vessels. May function in the formation of the venous and lymphatic vascular systems during embryogenesis, and also in the maintenance of differentiated lymphatic endothelium in adults. Binds and activates VEGFR-3 (Flt4) receptor. This chain is Vascular endothelial growth factor D, found in Rattus norvegicus (Rat).